A 730-amino-acid polypeptide reads, in one-letter code: Rap1 GTPase-activating protein 2 (730 aa).

Residue Ser7 is modified to Phosphoserine; by PKG/PRKG1; in vitro. The disordered stretch occupies residues 32–53 (ANSSDATLPDRPLSPPLTAPPT). At Ser45 the chain carries Phosphoserine. Thr49 bears the Phosphothreonine mark. Positions 248–464 (IVSYDEHEVN…RTRAALLDNL (217 aa)) constitute a Rap-GAP domain. Phosphoserine is present on Ser507. Residues 509–533 (ETMVGGQKKSHSGGIPGSLSGGISH) form a disordered region. Residues Ser544, Ser558, Ser564, Ser612, and Ser613 each carry the phosphoserine modification. The disordered stretch occupies residues 552 to 730 (VKNQSRSPIK…LSHASSGAGH (179 aa)). Over residues 585–613 (DSTSSTPKTPDGGHSSQEIKSETSSNPSS) the composition is skewed to polar residues. Residues 618–631 (PNKEKPFMKLKENG) are compositionally biased toward basic and acidic residues. Residues 635–647 (SRSSSSTSSVSST) are compositionally biased toward low complexity. Polar residues predominate over residues 661 to 670 (GSQPSTTSPF). Residues 678 to 687 (SPSPSSESPS) are compositionally biased toward low complexity. The span at 699–712 (RSPTDAKSRNSPRS) shows a compositional bias: polar residues.

In terms of processing, in vitro phosphorylated by cGMP-dependent protein kinase 1 (cGKI) at Ser-7; the phosphorylation probably does not regulate GAP activity. Isoform 1 and isoform 2 are expressed in platelets with isoform 2 being the predominant form. Expressed in lymphocytes, heart, testis and pancreas.

It is found in the cytoplasm. Its subcellular location is the perinuclear region. In terms of biological role, GTPase activator for the nuclear Ras-related regulatory protein RAP-1A (KREV-1), converting it to the putatively inactive GDP-bound state. In Homo sapiens (Human), this protein is Rap1 GTPase-activating protein 2 (RAP1GAP2).